The following is a 374-amino-acid chain: tRNA (adenine(58)-N(1))-methyltransferase catalytic subunit TRM61 (374 aa).

Residues 120–122, Glu138, Arg143, 167–168, and Asp202 contribute to the S-adenosyl-L-methionine site; these read SGS and DV.

Belongs to the class I-like SAM-binding methyltransferase superfamily. TRM61 family. Heterotetramer; composed of two copies of TRM6 and two copies of TRM61.

The protein resides in the nucleus. It catalyses the reaction adenosine(58) in tRNA + S-adenosyl-L-methionine = N(1)-methyladenosine(58) in tRNA + S-adenosyl-L-homocysteine + H(+). In terms of biological role, catalytic subunit of tRNA (adenine-N(1)-)-methyltransferase, which catalyzes the formation of N(1)-methyladenine at position 58 (m1A58) in initiator methionyl-tRNA. This is tRNA (adenine(58)-N(1))-methyltransferase catalytic subunit TRM61 (TRM61) from Candida glabrata (strain ATCC 2001 / BCRC 20586 / JCM 3761 / NBRC 0622 / NRRL Y-65 / CBS 138) (Yeast).